The chain runs to 268 residues: Glycine/sarcosine N-methyltransferase (268 aa).

S-adenosyl-L-methionine-binding positions include tyrosine 26, tryptophan 34, arginine 43, alanine 67, aspartate 88, aspartate 114 to tryptophan 115, and leucine 132. Substrate contacts are provided by asparagine 134, arginine 167, and tyrosine 206.

This sequence belongs to the class I-like SAM-binding methyltransferase superfamily. Glycine N-methyltransferase family. Monomer.

It catalyses the reaction glycine + 2 S-adenosyl-L-methionine = N,N-dimethylglycine + 2 S-adenosyl-L-homocysteine + 2 H(+). It carries out the reaction glycine + S-adenosyl-L-methionine = sarcosine + S-adenosyl-L-homocysteine + H(+). The catalysed reaction is sarcosine + S-adenosyl-L-methionine = N,N-dimethylglycine + S-adenosyl-L-homocysteine + H(+). Its pathway is amine and polyamine biosynthesis; betaine biosynthesis via glycine pathway; betaine from glycine: step 1/3. It functions in the pathway amine and polyamine biosynthesis; betaine biosynthesis via glycine pathway; betaine from glycine: step 2/3. P-chloromercuribenzoic acid inhibits more than 95% of the GSMT activities on glycine and sarcosine, and S-adenosylhomocysteine (AdoHcy) inhibits completely GSMT activities. In terms of biological role, catalyzes the methylation of glycine and sarcosine to sarcosine and dimethylglycine, respectively, with S-adenosylmethionine (AdoMet) acting as the methyl donor. It has strict specificity for glycine and sarcosine as the methyl group acceptors. The protein is Glycine/sarcosine N-methyltransferase of Halorhodospira halochloris (Ectothiorhodospira halochloris).